Reading from the N-terminus, the 181-residue chain is ATP-dependent protease subunit HslV (181 aa).

The active site involves T7. Na(+)-binding residues include A162, C165, and T168.

It belongs to the peptidase T1B family. HslV subfamily. As to quaternary structure, a double ring-shaped homohexamer of HslV is capped on each side by a ring-shaped HslU homohexamer. The assembly of the HslU/HslV complex is dependent on binding of ATP.

The protein resides in the cytoplasm. It carries out the reaction ATP-dependent cleavage of peptide bonds with broad specificity.. Its activity is regulated as follows. Allosterically activated by HslU binding. In terms of biological role, protease subunit of a proteasome-like degradation complex believed to be a general protein degrading machinery. The chain is ATP-dependent protease subunit HslV from Coxiella burnetii (strain RSA 331 / Henzerling II).